Reading from the N-terminus, the 234-residue chain is AA9 family lytic polysaccharide monooxygenase D (234 aa).

An N-terminal signal peptide occupies residues 1 to 18 (MRIEKLLNAALLAGAVSA). Cu(2+)-binding residues include histidine 19 and histidine 95. A disulfide bridge connects residues cysteine 57 and cysteine 182. 2 residues coordinate O2: histidine 168 and glutamine 177. Tyrosine 179 serves as a coordination point for Cu(2+).

This sequence belongs to the polysaccharide monooxygenase AA9 family. Requires Cu(2+) as cofactor.

The protein localises to the secreted. The catalysed reaction is [(1-&gt;4)-beta-D-glucosyl]n+m + reduced acceptor + O2 = 4-dehydro-beta-D-glucosyl-[(1-&gt;4)-beta-D-glucosyl]n-1 + [(1-&gt;4)-beta-D-glucosyl]m + acceptor + H2O.. Functionally, lytic polysaccharide monooxygenase (LPMO) that depolymerizes crystalline and amorphous polysaccharides via the oxidation of scissile alpha- or beta-(1-4)-glycosidic bonds, yielding C1 or C4 oxidation products. Catalysis by LPMOs requires the reduction of the active-site copper from Cu(II) to Cu(I) by a reducing agent and H(2)O(2) or O(2) as a cosubstrate. This is AA9 family lytic polysaccharide monooxygenase D from Malbranchea cinnamomea (Thermophilic fungus).